Here is a 172-residue protein sequence, read N- to C-terminus: Adenine phosphoribosyltransferase (172 aa).

Belongs to the purine/pyrimidine phosphoribosyltransferase family. As to quaternary structure, homodimer.

It is found in the cytoplasm. The catalysed reaction is AMP + diphosphate = 5-phospho-alpha-D-ribose 1-diphosphate + adenine. Its pathway is purine metabolism; AMP biosynthesis via salvage pathway; AMP from adenine: step 1/1. In terms of biological role, catalyzes a salvage reaction resulting in the formation of AMP, that is energically less costly than de novo synthesis. This Pelobacter propionicus (strain DSM 2379 / NBRC 103807 / OttBd1) protein is Adenine phosphoribosyltransferase.